We begin with the raw amino-acid sequence, 442 residues long: Protein cereblon (442 aa).

The tract at residues 1–45 (MAGEGDQQDAAHNMGNHLPLLPAESEEEDEMEVEDQDSKEAKKPN) is disordered. The segment covering 24-35 (ESEEEDEMEVED) has biased composition (acidic residues). A Phosphoserine modification is found at S25. In terms of domain architecture, Lon N-terminal spans 81–319 (IPVLPQVMMI…CELDIMNKCT (239 aa)). The CULT domain occupies 318–426 (CTSLCCKQCQ…LTRSALLPTI (109 aa)). The Zn(2+) site is built by C323 and C326. The (S)-thalidomide site is built by H378, W380, and W386. Positions 391 and 394 each coordinate Zn(2+).

It belongs to the CRBN family. Interacts with KCNT1. Component of a DCX (DDB1-CUL4-X-box) protein ligase complex, at least composed of CRBN, CUL4A, DDB1 and RBX1. Interacts directly with DDB1. Interacts (in pomalidomide-bound form) with IKZF1 and IKZF3. Interacts with ILF2. Interacts with TRAF6 and ECSIT. In terms of processing, ubiquitinated, ubiquitination is mediated by its own DCX protein ligase complex. Widely expressed. Highly expressed in brain.

The protein resides in the cytoplasm. Its subcellular location is the nucleus. It is found in the membrane. It participates in protein modification; protein ubiquitination. In terms of biological role, substrate recognition component of a DCX (DDB1-CUL4-X-box) E3 protein ligase complex that mediates the ubiquitination and subsequent proteasomal degradation of target proteins, such as MEIS2, ILF2 or GLUL. Normal degradation of key regulatory proteins is required for normal limb outgrowth and expression of the fibroblast growth factor FGF8. Maintains presynaptic glutamate release and consequently cognitive functions, such as memory and learning, by negatively regulating large-conductance calcium-activated potassium (BK) channels in excitatory neurons. Likely to function by regulating the assembly and neuronal surface expression of BK channels via its interaction with KCNT1. May also be involved in regulating anxiety-like behaviors via a BK channel-independent mechanism. Plays a negative role in TLR4 signaling by interacting with TRAF6 and ECSIT, leading to inhibition of ECSIT ubiquitination, an important step of the signaling. The sequence is that of Protein cereblon (CRBN) from Homo sapiens (Human).